Here is a 239-residue protein sequence, read N- to C-terminus: Ubiquinone biosynthesis O-methyltransferase (239 aa).

S-adenosyl-L-methionine-binding residues include R44, G63, D84, and M128.

The protein belongs to the methyltransferase superfamily. UbiG/COQ3 family.

The enzyme catalyses a 3-demethylubiquinol + S-adenosyl-L-methionine = a ubiquinol + S-adenosyl-L-homocysteine + H(+). It catalyses the reaction a 3-(all-trans-polyprenyl)benzene-1,2-diol + S-adenosyl-L-methionine = a 2-methoxy-6-(all-trans-polyprenyl)phenol + S-adenosyl-L-homocysteine + H(+). The protein operates within cofactor biosynthesis; ubiquinone biosynthesis. Its function is as follows. O-methyltransferase that catalyzes the 2 O-methylation steps in the ubiquinone biosynthetic pathway. This Xanthomonas euvesicatoria pv. vesicatoria (strain 85-10) (Xanthomonas campestris pv. vesicatoria) protein is Ubiquinone biosynthesis O-methyltransferase.